The following is a 66-amino-acid chain: Large ribosomal subunit protein bL35 (66 aa).

The segment covering 1–16 (MPKMKTHKGSAKRFKK) has biased composition (basic residues). The segment at 1–24 (MPKMKTHKGSAKRFKKTGTGQLKR) is disordered.

Belongs to the bacterial ribosomal protein bL35 family.

The protein is Large ribosomal subunit protein bL35 of Anoxybacillus flavithermus (strain DSM 21510 / WK1).